The chain runs to 446 residues: Tetratricopeptide repeat protein 23 (446 aa).

5 TPR repeats span residues 45–78, 137–170, 186–219, 310–347, and 356–389; these read LRLSEEKAKSYASSHEYKKALHELVHCMALTRIC, VELFHTLGQALLSLQKFKEASKNLTKAEILSKEM, ARIKLSFAQVYQGQKKSKEALPHYQEALEYTEIS, TAKFLSIQDDYCHFLQVTGQDEKATSIFRESLEAKVAV, and AETYRLLGVADLAQGNQTGAHKKLKKCLQIQTLL. The disordered stretch occupies residues 410 to 446; that stretch reads APEVPARPRPSPGAKAAFCAGGRPYSVPGRTRPSAAD.

As to quaternary structure, associated with the EvC complex composed of EFCAB7, IQCE, EVC2 and EVC.

Its subcellular location is the cell projection. The protein localises to the cilium. In terms of biological role, participates positively in the ciliary Hedgehog (Hh) signaling. This Bos taurus (Bovine) protein is Tetratricopeptide repeat protein 23 (TTC23).